The sequence spans 239 residues: Sugar fermentation stimulation protein homolog (239 aa).

This sequence belongs to the SfsA family.

The polypeptide is Sugar fermentation stimulation protein homolog (Synechococcus sp. (strain JA-3-3Ab) (Cyanobacteria bacterium Yellowstone A-Prime)).